The sequence spans 782 residues: Sulfate permease family protein 3 (782 aa).

A run of 12 helical transmembrane segments spans residues 30–52, 64–84, 86–106, 113–133, 196–216, 232–252, 274–294, 302–322, 359–379, 398–418, 433–453, and 497–517; these read YACS…TWLP, LSGG…LASI, GVPP…YIFF, ALGG…KVML, IHVA…MGVF, GFVV…MLGI, LDNV…FLVF, WLNS…VVGI, HIGL…ITVA, ALGF…TSGF, LTCL…GPAL, and FFLT…GFAV. Residues 546-700 enclose the STAS domain; sequence KRDLERIQGN…NKVGDAVKAA (155 aa). Acidic residues predominate over residues 728–742; the sequence is IDEESSDSNDNDDAE. The segment at 728 to 782 is disordered; it reads IDEESSDSNDNDDAEIQERITEESENSEEVMSETSVSIEDATSLTSSRNSINSEE. Positions 767-782 are enriched in polar residues; sequence DATSLTSSRNSINSEE.

Belongs to the SLC26A/SulP transporter (TC 2.A.53) family.

Its subcellular location is the membrane. Possible sulfate transporter. This chain is Sulfate permease family protein 3 (sulp-3), found in Caenorhabditis elegans.